The primary structure comprises 98 residues: Co-chaperonin GroES (98 aa).

This sequence belongs to the GroES chaperonin family. As to quaternary structure, heptamer of 7 subunits arranged in a ring. Interacts with the chaperonin GroEL.

The protein resides in the cytoplasm. In terms of biological role, together with the chaperonin GroEL, plays an essential role in assisting protein folding. The GroEL-GroES system forms a nano-cage that allows encapsulation of the non-native substrate proteins and provides a physical environment optimized to promote and accelerate protein folding. GroES binds to the apical surface of the GroEL ring, thereby capping the opening of the GroEL channel. This Corynebacterium diphtheriae (strain ATCC 700971 / NCTC 13129 / Biotype gravis) protein is Co-chaperonin GroES.